A 477-amino-acid polypeptide reads, in one-letter code: FAD-dependent monooxygenase paxM (477 aa).

The helical transmembrane segment at 4 to 24 (AEFQVIIVGGSIGGLTLAHCL) threads the bilayer. FAD-binding residues include E35, G49, and R108. The active site involves R195. The FAD site is built by D308 and A321. A helical membrane pass occupies residues 446–466 (LMIYLFGLTIVYTSLTMMFDL).

This sequence belongs to the paxM FAD-dependent monooxygenase family. The cofactor is FAD.

The protein resides in the membrane. The protein operates within secondary metabolite biosynthesis. In terms of biological role, FAD-dependent monooxygenase; part of the gene cluster that mediates the biosynthesis of paxilline, a mycotoxin that acts as an inhibitor of mammalian maxi-K channels. PaxG, the geranylgeranyl diphosphate (GGPP) synthase is proposed to catalyze the first step in paxilline biosynthesis. Condensation of indole-3-glycerol phosphate with GGPP by paxC then forms 3-geranylgeranylindole (3-GGI), followed by epoxidation and cyclization of this intermediate (by paxM and paxB) to form paspaline. Paspaline is subsequently converted to 13-desoxypaxilline by paxP, the latter being then converted to paxilline by paxQ. Finally paxilline can be mono- and di-prenylated by paxD. This is FAD-dependent monooxygenase paxM from Penicillium paxilli.